A 297-amino-acid chain; its full sequence is MSTSNSSIPASMPRWRQYWVLTKPRVTQLAVFCAVIGMFLATPGMVPYPVLFGGIAGIWLLAGAAFAVNCLIEQAVDAKMKRTSWRPSATGEVTPFHIIIFSIILGSLGMIILWNFCNPLTMWLTLATFVGYAVIYTWLLKPATPQNIVIGGLSGAMPPALGWAAVTNGLSAEAWLLVLIIFVWTPPHFWALALYRRDDYVQSGLPMLPVTHGERFTLLNILLYTLILIAATLLPYIYGMSGIIYLISAIVLGLMFLAYVIALFVSYSDALAKKTFRFSITYLSLLFAALLIDHYFL.

A run of 9 helical transmembrane segments spans residues 26-46 (VTQL…PGMV), 48-68 (YPVL…AFAV), 96-116 (FHII…LWNF), 120-140 (LTMW…TWLL), 147-167 (NIVI…AAVT), 174-194 (AWLL…ALAL), 218-238 (LLNI…PYIY), 243-263 (IIYL…VIAL), and 276-296 (FRFS…DHYF).

It belongs to the UbiA prenyltransferase family. Protoheme IX farnesyltransferase subfamily.

The protein localises to the cell membrane. The enzyme catalyses heme b + (2E,6E)-farnesyl diphosphate + H2O = Fe(II)-heme o + diphosphate. Its pathway is porphyrin-containing compound metabolism; heme O biosynthesis; heme O from protoheme: step 1/1. Its function is as follows. Converts heme B (protoheme IX) to heme O by substitution of the vinyl group on carbon 2 of heme B porphyrin ring with a hydroxyethyl farnesyl side group. This chain is Protoheme IX farnesyltransferase, found in Polynucleobacter asymbioticus (strain DSM 18221 / CIP 109841 / QLW-P1DMWA-1) (Polynucleobacter necessarius subsp. asymbioticus).